Here is a 160-residue protein sequence, read N- to C-terminus: Ribosomal RNA large subunit methyltransferase H (160 aa).

Residues Leu-76, Gly-108, and 127–132 contribute to the S-adenosyl-L-methionine site; that span reads LGKMTW.

The protein belongs to the RNA methyltransferase RlmH family. Homodimer.

It is found in the cytoplasm. It carries out the reaction pseudouridine(1915) in 23S rRNA + S-adenosyl-L-methionine = N(3)-methylpseudouridine(1915) in 23S rRNA + S-adenosyl-L-homocysteine + H(+). In terms of biological role, specifically methylates the pseudouridine at position 1915 (m3Psi1915) in 23S rRNA. This chain is Ribosomal RNA large subunit methyltransferase H, found in Rhizobium rhizogenes (strain K84 / ATCC BAA-868) (Agrobacterium radiobacter).